The chain runs to 152 residues: Transcriptional regulator MraZ (152 aa).

2 consecutive SpoVT-AbrB domains span residues 5 to 52 (ATLV…PLPE) and 81 to 124 (ASEC…DETT).

It belongs to the MraZ family. In terms of assembly, forms oligomers.

Its subcellular location is the cytoplasm. It is found in the nucleoid. Its function is as follows. Negatively regulates its own expression and that of the subsequent genes in the proximal part of the division and cell wall (dcw) gene cluster. Acts by binding directly to DNA. May also regulate the expression of genes outside the dcw cluster. This Escherichia coli O127:H6 (strain E2348/69 / EPEC) protein is Transcriptional regulator MraZ.